The primary structure comprises 621 residues: Chaperone protein DnaK (621 aa).

Thr179 is modified (phosphothreonine; by autocatalysis). A compositionally biased stretch (polar residues) spans 583–605 (SQVQDTQGAAQGQSQGNPQQTAD). Residues 583-621 (SQVQDTQGAAQGQSQGNPQQTADNRGKVVDAEIVDENKE) are disordered. Over residues 606–621 (NRGKVVDAEIVDENKE) the composition is skewed to basic and acidic residues.

This sequence belongs to the heat shock protein 70 family.

In terms of biological role, acts as a chaperone. The chain is Chaperone protein DnaK from Endomicrobium trichonymphae.